The primary structure comprises 595 residues: Glutamyl-tRNA(Gln) amidotransferase subunit B, mitochondrial (595 aa).

Residues 1–114 (MPRLWYSRYL…RAPTSTVAEP (114 aa)) constitute a mitochondrion transit peptide. The interval 59–78 (KEEAKRSKSQSRNGRGKKQV) is disordered.

The protein belongs to the GatB/GatE family. GatB subfamily. As to quaternary structure, subunit of the heterotrimeric GatCAB amidotransferase (AdT) complex, composed of A, B and C subunits.

The protein resides in the mitochondrion. It carries out the reaction L-glutamyl-tRNA(Gln) + L-glutamine + ATP + H2O = L-glutaminyl-tRNA(Gln) + L-glutamate + ADP + phosphate + H(+). Allows the formation of correctly charged Gln-tRNA(Gln) through the transamidation of misacylated Glu-tRNA(Gln) in the mitochondria. The reaction takes place in the presence of glutamine and ATP through an activated gamma-phospho-Glu-tRNA(Gln). The polypeptide is Glutamyl-tRNA(Gln) amidotransferase subunit B, mitochondrial (Talaromyces stipitatus (strain ATCC 10500 / CBS 375.48 / QM 6759 / NRRL 1006) (Penicillium stipitatum)).